Consider the following 544-residue polypeptide: Chaperonin GroEL (544 aa).

ATP contacts are provided by residues 29-32, K50, 86-90, G414, 477-479, and D493; these read TMGP, DGTTT, and NAV.

Belongs to the chaperonin (HSP60) family. Forms a cylinder of 14 subunits composed of two heptameric rings stacked back-to-back. Interacts with the co-chaperonin GroES.

The protein resides in the cytoplasm. The enzyme catalyses ATP + H2O + a folded polypeptide = ADP + phosphate + an unfolded polypeptide.. Functionally, together with its co-chaperonin GroES, plays an essential role in assisting protein folding. The GroEL-GroES system forms a nano-cage that allows encapsulation of the non-native substrate proteins and provides a physical environment optimized to promote and accelerate protein folding. This chain is Chaperonin GroEL, found in Campylobacter curvus (strain 525.92).